Reading from the N-terminus, the 153-residue chain is Endoribonuclease YbeY (153 aa).

3 residues coordinate Zn(2+): histidine 116, histidine 120, and histidine 126.

Belongs to the endoribonuclease YbeY family. The cofactor is Zn(2+).

Its subcellular location is the cytoplasm. Its function is as follows. Single strand-specific metallo-endoribonuclease involved in late-stage 70S ribosome quality control and in maturation of the 3' terminus of the 16S rRNA. This Paraburkholderia phytofirmans (strain DSM 17436 / LMG 22146 / PsJN) (Burkholderia phytofirmans) protein is Endoribonuclease YbeY.